We begin with the raw amino-acid sequence, 274 residues long: Thiamine kinase (274 aa).

It belongs to the thiamine kinase family.

It catalyses the reaction thiamine + ATP = thiamine phosphate + ADP + H(+). It functions in the pathway cofactor biosynthesis; thiamine diphosphate biosynthesis; thiamine phosphate from thiamine: step 1/1. In terms of biological role, catalyzes the ATP-dependent phosphorylation of thiamine to thiamine phosphate. Is involved in thiamine salvage. The sequence is that of Thiamine kinase from Escherichia coli O6:K15:H31 (strain 536 / UPEC).